A 682-amino-acid chain; its full sequence is Methionine synthase reductase (682 aa).

Residues 4 to 147 (FLIAFGSQTG…EVEPWIEKFF (144 aa)) enclose the Flavodoxin-like domain. 93–124 (LLGLGDSNYSSYQTIPRKIDKQLTALGANRLF) is an FMN binding site. In terms of domain architecture, FAD-binding FR-type spans 271 to 516 (TKPFEVLVVS…GKEPARFRLP (246 aa)). K293 is a binding site for NADP(+). FAD-binding positions include 455–458 (RPYS) and 488–491 (GLAT). NADP(+) contacts are provided by residues 607 to 609 (RVQ) and D643. W681 serves as a coordination point for FAD.

FAD is required as a cofactor. It depends on FMN as a cofactor.

The catalysed reaction is 2 methylcob(III)alamin-[methionine synthase] + 2 S-adenosyl-L-homocysteine + NADP(+) + H(+) = 2 cob(II)alamin-[methionine synthase] + 2 S-adenosyl-L-methionine + NADPH. Involved in the reductive regeneration of cob(I)alamin cofactor required for the maintenance of methionine synthase in a functional state. The sequence is that of Methionine synthase reductase from Caenorhabditis elegans.